Consider the following 358-residue polypeptide: Histidinol-phosphate aminotransferase (358 aa).

At Lys217 the chain carries N6-(pyridoxal phosphate)lysine.

Belongs to the class-II pyridoxal-phosphate-dependent aminotransferase family. Histidinol-phosphate aminotransferase subfamily. Homodimer. Requires pyridoxal 5'-phosphate as cofactor.

The catalysed reaction is L-histidinol phosphate + 2-oxoglutarate = 3-(imidazol-4-yl)-2-oxopropyl phosphate + L-glutamate. Its pathway is amino-acid biosynthesis; L-histidine biosynthesis; L-histidine from 5-phospho-alpha-D-ribose 1-diphosphate: step 7/9. The chain is Histidinol-phosphate aminotransferase from Ruminiclostridium cellulolyticum (strain ATCC 35319 / DSM 5812 / JCM 6584 / H10) (Clostridium cellulolyticum).